The following is a 169-amino-acid chain: Transcription antitermination protein NusB (169 aa).

The span at 1–19 (MAEMKKTIDNKPAPKGEKK) shows a compositional bias: basic and acidic residues. Positions 1-22 (MAEMKKTIDNKPAPKGEKKANR) are disordered.

This sequence belongs to the NusB family.

Functionally, involved in transcription antitermination. Required for transcription of ribosomal RNA (rRNA) genes. Binds specifically to the boxA antiterminator sequence of the ribosomal RNA (rrn) operons. The sequence is that of Transcription antitermination protein NusB from Rhodopseudomonas palustris (strain BisB18).